The following is a 938-amino-acid chain: Isoleucine--tRNA ligase (938 aa).

The 'HIGH' region motif lies at 58-68 (PYANGSIHIGH). K183 bears the N6-acetyllysine mark. An L-isoleucyl-5'-AMP-binding site is contributed by E561. A 'KMSKS' region motif is present at residues 602–606 (KMSKS). Position 605 (K605) interacts with ATP. Zn(2+) is bound by residues C901, C904, C921, and C924.

Belongs to the class-I aminoacyl-tRNA synthetase family. IleS type 1 subfamily. As to quaternary structure, monomer. The cofactor is Zn(2+).

It localises to the cytoplasm. The enzyme catalyses tRNA(Ile) + L-isoleucine + ATP = L-isoleucyl-tRNA(Ile) + AMP + diphosphate. Its function is as follows. Catalyzes the attachment of isoleucine to tRNA(Ile). As IleRS can inadvertently accommodate and process structurally similar amino acids such as valine, to avoid such errors it has two additional distinct tRNA(Ile)-dependent editing activities. One activity is designated as 'pretransfer' editing and involves the hydrolysis of activated Val-AMP. The other activity is designated 'posttransfer' editing and involves deacylation of mischarged Val-tRNA(Ile). The sequence is that of Isoleucine--tRNA ligase from Escherichia coli O6:H1 (strain CFT073 / ATCC 700928 / UPEC).